Here is a 459-residue protein sequence, read N- to C-terminus: Bifunctional protein GlmU (459 aa).

Positions 1-229 are pyrophosphorylase; it reads MSNFAIXLAA…FDESLGVNDR (229 aa). UDP-N-acetyl-alpha-D-glucosamine contacts are provided by residues 8–11, Lys-22, Gln-72, and 77–78; these read LAAG and GT. Asp-102 contributes to the Mg(2+) binding site. Residues Gly-139, Glu-154, Asn-169, and Asn-227 each contribute to the UDP-N-acetyl-alpha-D-glucosamine site. Mg(2+) is bound at residue Asn-227. Positions 230-250 are linker; sequence VALATAESVMRRRINHKHMVN. Residues 251 to 459 are N-acetyltransferase; the sequence is GVSFVNPEAT…TRLPHHPKNQ (209 aa). UDP-N-acetyl-alpha-D-glucosamine contacts are provided by Arg-332 and Lys-350. Catalysis depends on His-362, which acts as the Proton acceptor. The UDP-N-acetyl-alpha-D-glucosamine site is built by Tyr-365 and Asn-376. Residues Ala-379, 385 to 386, Ser-404, Ala-422, and Arg-439 each bind acetyl-CoA; that span reads NY.

In the N-terminal section; belongs to the N-acetylglucosamine-1-phosphate uridyltransferase family. The protein in the C-terminal section; belongs to the transferase hexapeptide repeat family. Homotrimer. Mg(2+) is required as a cofactor.

Its subcellular location is the cytoplasm. The enzyme catalyses alpha-D-glucosamine 1-phosphate + acetyl-CoA = N-acetyl-alpha-D-glucosamine 1-phosphate + CoA + H(+). It carries out the reaction N-acetyl-alpha-D-glucosamine 1-phosphate + UTP + H(+) = UDP-N-acetyl-alpha-D-glucosamine + diphosphate. It functions in the pathway nucleotide-sugar biosynthesis; UDP-N-acetyl-alpha-D-glucosamine biosynthesis; N-acetyl-alpha-D-glucosamine 1-phosphate from alpha-D-glucosamine 6-phosphate (route II): step 2/2. Its pathway is nucleotide-sugar biosynthesis; UDP-N-acetyl-alpha-D-glucosamine biosynthesis; UDP-N-acetyl-alpha-D-glucosamine from N-acetyl-alpha-D-glucosamine 1-phosphate: step 1/1. The protein operates within bacterial outer membrane biogenesis; LPS lipid A biosynthesis. Functionally, catalyzes the last two sequential reactions in the de novo biosynthetic pathway for UDP-N-acetylglucosamine (UDP-GlcNAc). The C-terminal domain catalyzes the transfer of acetyl group from acetyl coenzyme A to glucosamine-1-phosphate (GlcN-1-P) to produce N-acetylglucosamine-1-phosphate (GlcNAc-1-P), which is converted into UDP-GlcNAc by the transfer of uridine 5-monophosphate (from uridine 5-triphosphate), a reaction catalyzed by the N-terminal domain. In Streptococcus pneumoniae serotype 19F (strain G54), this protein is Bifunctional protein GlmU.